The following is an 814-amino-acid chain: Lon protease 1 (814 aa).

Positions 1–17 (MTDDRDKTNEDPEKIIE) are enriched in basic and acidic residues. The segment at 1–28 (MTDDRDKTNEDPEKIIEADFNPEDPDDA) is disordered. Positions 49–245 (LPIIPLRPRP…KVLVLLKKEL (197 aa)) constitute a Lon N-terminal domain. 398-405 (GPPGVGKT) contributes to the ATP binding site. The region spanning 633–814 (EDVPGVVTGL…YRDVYQVAFG (182 aa)) is the Lon proteolytic domain. Catalysis depends on residues S721 and K764.

It belongs to the peptidase S16 family. As to quaternary structure, homohexamer. Organized in a ring with a central cavity.

It is found in the cytoplasm. It catalyses the reaction Hydrolysis of proteins in presence of ATP.. In terms of biological role, ATP-dependent serine protease that mediates the selective degradation of mutant and abnormal proteins as well as certain short-lived regulatory proteins. Required for cellular homeostasis and for survival from DNA damage and developmental changes induced by stress. Degrades polypeptides processively to yield small peptide fragments that are 5 to 10 amino acids long. Binds to DNA in a double-stranded, site-specific manner. In Syntrophotalea carbinolica (strain DSM 2380 / NBRC 103641 / GraBd1) (Pelobacter carbinolicus), this protein is Lon protease 1.